Here is an 861-residue protein sequence, read N- to C-terminus: Probable linoleate 9S-lipoxygenase 7 (861 aa).

A PLAT domain is found at 29–160 (NVLDFTDLAG…NYKSDRIFFA (132 aa)). Positions 163 to 861 (PYLPSETPEL…GKGIPNSVSI (699 aa)) constitute a Lipoxygenase domain. The interval 220–246 (TLGGSAEYPYPRRGRTGRPPTRTDPKS) is disordered. Positions 522, 527, 713, 717, and 861 each coordinate Fe cation.

It belongs to the lipoxygenase family. In terms of assembly, monomer. Fe cation is required as a cofactor. As to expression, expressed in tubers. Detected in sprouts and flowers. but not in leaves or stems.

It localises to the cytoplasm. The enzyme catalyses (9Z,12Z)-octadecadienoate + O2 = (9S)-hydroperoxy-(10E,12Z)-octadecadienoate. The protein operates within lipid metabolism; oxylipin biosynthesis. Plant lipoxygenases may be involved in a number of diverse aspects of plant physiology including growth and development, pest resistance, and senescence or responses to wounding. Catalyzes the hydroperoxidation of lipids containing a cis,cis-1,4-pentadiene structure. The polypeptide is Probable linoleate 9S-lipoxygenase 7 (LOX1.7) (Solanum tuberosum (Potato)).